We begin with the raw amino-acid sequence, 141 residues long: Nucleoside triphosphatase NudI (141 aa).

The 141-residue stretch at 1–141 (MRQRTIVCPI…RLTFTQKGLL (141 aa)) folds into the Nudix hydrolase domain. Residues 38 to 59 (GGMEPGETMEEALRREIREELG) carry the Nudix box motif.

The protein belongs to the Nudix hydrolase family. NudI subfamily. As to quaternary structure, monomer. Mg(2+) is required as a cofactor.

The enzyme catalyses a ribonucleoside 5'-triphosphate + H2O = a ribonucleoside 5'-phosphate + diphosphate + H(+). The catalysed reaction is a 2'-deoxyribonucleoside 5'-triphosphate + H2O = a 2'-deoxyribonucleoside 5'-phosphate + diphosphate + H(+). It carries out the reaction dUTP + H2O = dUMP + diphosphate + H(+). It catalyses the reaction dTTP + H2O = dTMP + diphosphate + H(+). The enzyme catalyses dCTP + H2O = dCMP + diphosphate + H(+). In terms of biological role, catalyzes the hydrolysis of nucleoside triphosphates, with a preference for pyrimidine deoxynucleoside triphosphates (dUTP, dTTP and dCTP). The chain is Nucleoside triphosphatase NudI from Enterobacter sp. (strain 638).